The sequence spans 341 residues: Ribosomal RNA small subunit methyltransferase C (341 aa).

It belongs to the methyltransferase superfamily. RsmC family. As to quaternary structure, monomer.

It is found in the cytoplasm. The catalysed reaction is guanosine(1207) in 16S rRNA + S-adenosyl-L-methionine = N(2)-methylguanosine(1207) in 16S rRNA + S-adenosyl-L-homocysteine + H(+). In terms of biological role, specifically methylates the guanine in position 1207 of 16S rRNA in the 30S particle. The sequence is that of Ribosomal RNA small subunit methyltransferase C from Vibrio parahaemolyticus serotype O3:K6 (strain RIMD 2210633).